We begin with the raw amino-acid sequence, 1003 residues long: Leucine-rich repeat receptor-like serine/threonine-protein kinase BAM1 (1003 aa).

Residues 1-19 (MKLFLLLLFLLHISHTFTA) form the signal peptide. Over 20-640 (SRPISEFRAL…HSKGPLSASM (621 aa)) the chain is Extracellular. 22 LRR repeats span residues 68–92 (RRHV…VSHL), 93–116 (RLLQ…ISSL), 117–140 (SGLR…ISSG), 142–165 (VNLR…VTNL), 166–191 (TQLR…SWPV), 193–213 (EYLA…IGNL), 215–238 (TLRE…IGNL), 239–262 (SELV…IGKL), 263–285 (QKLD…ELGT), 286–310 (LSSL…FAEL), 312–334 (NLTL…IGDL), 335–358 (PELE…LGEN), 359–382 (GKLN…MCSG), 385–406 (LETL…LGKC), 407–430 (ESLT…LFGL), 432–454 (KLTQ…GGVS), 455–480 (VNLG…NFTG), 482–502 (QKLL…VGKL), 503–526 (QQLS…ISRC), 527–550 (KLLT…ITAM), 551–574 (KILN…ISSM), and 575–598 (QSLT…GQFS). Residues N80, N97, N123, N130, N153, and N164 are each glycosylated (N-linked (GlcNAc...) asparagine). N212 and N237 each carry an N-linked (GlcNAc...) asparagine glycan. N312 and N346 each carry an N-linked (GlcNAc...) asparagine glycan. N-linked (GlcNAc...) asparagine glycosylation occurs at N420. Residue N477 is glycosylated (N-linked (GlcNAc...) asparagine). Residues N557, N586, and N601 are each glycosylated (N-linked (GlcNAc...) asparagine). Residues 641–661 (KLLLVLGLLVCSIAFAVVAII) form a helical membrane-spanning segment. The Cytoplasmic segment spans residues 662–1003 (KARSLKKASE…VQSPPDLLNL (342 aa)). T686 carries the phosphothreonine modification. The region spanning 694 to 971 (LKEDNIIGKG…VQILTEIPKL (278 aa)) is the Protein kinase domain. Residues 700–708 (IGKGGAGIV) and K722 contribute to the ATP site. Phosphotyrosine occurs at positions 769 and 807. The active-site Proton acceptor is D820. S855 is modified (phosphoserine). 2 positions are modified to phosphotyrosine: Y863 and Y870. Position 871 is a phosphothreonine (T871). The segment at 969–1003 (PKLPPSKDQPMTESAPESELSPKSGVQSPPDLLNL) is disordered. S996 carries the post-translational modification Phosphoserine.

The protein belongs to the protein kinase superfamily. Ser/Thr protein kinase family. Self-interacts and interacts with BAM2 and CLV1. Binds to the CLV3, CLE5, CLE11, CLE18, CLE19, CLE22, CLE25, CLE26, CLE40, CLE41 and CLE42 mature peptides, probably via its extracellular leucine-rich repeat region. In terms of tissue distribution, expressed in seedlings, roots, leaves, inflorescences, flowers and siliques.

Its subcellular location is the cell membrane. It catalyses the reaction L-seryl-[protein] + ATP = O-phospho-L-seryl-[protein] + ADP + H(+). It carries out the reaction L-threonyl-[protein] + ATP = O-phospho-L-threonyl-[protein] + ADP + H(+). Necessary for male gametophyte development, as well as ovule specification and function. Involved in cell-cell communication process required during early anther development, and regulating cell division and differentiation to organize cell layers. Required for the development of high-ordered vascular strands within the leaf and a correlated control of leaf shape, size and symmetry. May regulate the CLV1-dependent CLV3-mediated signaling in meristems maintenance. The protein is Leucine-rich repeat receptor-like serine/threonine-protein kinase BAM1 (BAM1) of Arabidopsis thaliana (Mouse-ear cress).